The chain runs to 181 residues: uncharacterized protein (181 aa).

2 consecutive transmembrane segments (helical) span residues 24-46 and 55-77; these read IAAV…LLNV and GIVA…YILL.

It localises to the cell membrane. This is an uncharacterized protein from Archaeoglobus fulgidus (strain ATCC 49558 / DSM 4304 / JCM 9628 / NBRC 100126 / VC-16).